The primary structure comprises 556 residues: 2-isopropylmalate synthase (556 aa).

A Pyruvate carboxyltransferase domain is found at 33 to 307; the sequence is PIWCSSDLRD…NPGLDFSDID (275 aa). Aspartate 42, histidine 246, histidine 248, and asparagine 282 together coordinate Mg(2+). Positions 439–556 are regulatory domain; the sequence is ANVPYALISH…SLSQTQAKAA (118 aa).

The protein belongs to the alpha-IPM synthase/homocitrate synthase family. LeuA type 2 subfamily. Homodimer. Mg(2+) serves as cofactor.

It is found in the cytoplasm. It carries out the reaction 3-methyl-2-oxobutanoate + acetyl-CoA + H2O = (2S)-2-isopropylmalate + CoA + H(+). It functions in the pathway amino-acid biosynthesis; L-leucine biosynthesis; L-leucine from 3-methyl-2-oxobutanoate: step 1/4. Its function is as follows. Catalyzes the condensation of the acetyl group of acetyl-CoA with 3-methyl-2-oxobutanoate (2-ketoisovalerate) to form 3-carboxy-3-hydroxy-4-methylpentanoate (2-isopropylmalate). This chain is 2-isopropylmalate synthase, found in Pseudomonas syringae pv. syringae (strain B728a).